We begin with the raw amino-acid sequence, 124 residues long: Small ribosomal subunit protein uS11 (124 aa).

Belongs to the universal ribosomal protein uS11 family. Part of the 30S ribosomal subunit.

Functionally, located on the platform of the 30S subunit. The chain is Small ribosomal subunit protein uS11 from Methanococcus aeolicus (strain ATCC BAA-1280 / DSM 17508 / OCM 812 / Nankai-3).